A 417-amino-acid chain; its full sequence is Lissencephaly-1 homolog (417 aa).

Positions 7 to 39 (QKEELNGAILDYFDSSGYKLTSTEFTKETNIEL) constitute a LisH domain. Positions 52–80 (TSVIRLQKKVMDLEAKVSQLEEELNNGGR) form a coiled coil. A disordered region spans residues 72–93 (EEELNNGGRGPARRGKEDALPR). WD repeat units lie at residues 102–143 (GHRN…RTLK), 144–185 (GHTN…KTLH), 186–225 (GHDH…CTKT), 228–267 (GHED…CLLT), 270–339 (EHSH…CLQT), 342–383 (GHDN…KTIN), and 385–417 (AHSH…WKLG).

It belongs to the WD repeat LIS1/nudF family.

Its subcellular location is the cytoplasm. It localises to the cytoskeleton. The protein localises to the microtubule organizing center. The protein resides in the centrosome. Positively regulates the activity of the minus-end directed microtubule motor protein dynein. May enhance dynein-mediated microtubule sliding by targeting dynein to the microtubule plus end. Required for several dynein- and microtubule-dependent processes. This chain is Lissencephaly-1 homolog, found in Heterostelium pallidum (strain ATCC 26659 / Pp 5 / PN500) (Cellular slime mold).